A 185-amino-acid chain; its full sequence is Ribosome-recycling factor (185 aa).

Belongs to the RRF family.

It is found in the cytoplasm. Functionally, responsible for the release of ribosomes from messenger RNA at the termination of protein biosynthesis. May increase the efficiency of translation by recycling ribosomes from one round of translation to another. This Methylobacillus flagellatus (strain ATCC 51484 / DSM 6875 / VKM B-1610 / KT) protein is Ribosome-recycling factor.